The primary structure comprises 264 residues: Indole-3-glycerol phosphate synthase (264 aa).

The protein belongs to the TrpC family.

The catalysed reaction is 1-(2-carboxyphenylamino)-1-deoxy-D-ribulose 5-phosphate + H(+) = (1S,2R)-1-C-(indol-3-yl)glycerol 3-phosphate + CO2 + H2O. The protein operates within amino-acid biosynthesis; L-tryptophan biosynthesis; L-tryptophan from chorismate: step 4/5. The protein is Indole-3-glycerol phosphate synthase of Albidiferax ferrireducens (strain ATCC BAA-621 / DSM 15236 / T118) (Rhodoferax ferrireducens).